The following is a 200-amino-acid chain: Probable GTP-binding protein EngB (200 aa).

One can recognise an EngB-type G domain in the interval 26–200 (SIPEIAIAGR…IYEIAQCIKK (175 aa)). Residues 34–41 (GRSNVGKS), 61–65 (GCTKQ), 80–83 (DLPG), 147–150 (TKID), and 176–179 (VISA) each bind GTP. Mg(2+) is bound by residues S41 and T63.

The protein belongs to the TRAFAC class TrmE-Era-EngA-EngB-Septin-like GTPase superfamily. EngB GTPase family. Requires Mg(2+) as cofactor.

In terms of biological role, necessary for normal cell division and for the maintenance of normal septation. This is Probable GTP-binding protein EngB from Ehrlichia canis (strain Jake).